We begin with the raw amino-acid sequence, 268 residues long: Putative hydro-lyase ABAYE2440 (268 aa).

This sequence belongs to the D-glutamate cyclase family.

This is Putative hydro-lyase ABAYE2440 from Acinetobacter baumannii (strain AYE).